The chain runs to 25 residues: Histone H4 (25 aa).

Positions 1–14 are enriched in gly residues; sequence MSGRGKGGKGLGKG. A disordered region spans residues 1 to 25; the sequence is MSGRGKGGKGLGKGGAKRHRKVLRD. Ser2 is modified (N-acetylserine). N6-acetyllysine occurs at positions 6, 9, 13, 17, and 21. The span at 15 to 25 shows a compositional bias: basic residues; it reads GAKRHRKVLRD. The DNA-binding element occupies 17-21; sequence KRHRK.

It belongs to the histone H4 family. In terms of assembly, the nucleosome is a histone octamer containing two molecules each of H2A, H2B, H3 and H4 assembled in one H3-H4 heterotetramer and two H2A-H2B heterodimers. The octamer wraps approximately 147 bp of DNA.

It is found in the nucleus. The protein resides in the chromosome. Core component of nucleosome. Nucleosomes wrap and compact DNA into chromatin, limiting DNA accessibility to the cellular machineries which require DNA as a template. Histones thereby play a central role in transcription regulation, DNA repair, DNA replication and chromosomal stability. DNA accessibility is regulated via a complex set of post-translational modifications of histones, also called histone code, and nucleosome remodeling. In Medicago sativa (Alfalfa), this protein is Histone H4.